Reading from the N-terminus, the 134-residue chain is Ribonuclease VapC40 (134 aa).

Positions 3–126 (APDTSVLVAG…LRAVETYERL (124 aa)) constitute a PINc domain. Mg(2+)-binding residues include Asp5 and Asp98.

Belongs to the PINc/VapC protein family. Mg(2+) is required as a cofactor.

Functionally, toxic component of a type II toxin-antitoxin (TA) system. An RNase. Its cognate antitoxin is VapB40. The polypeptide is Ribonuclease VapC40 (Mycobacterium tuberculosis (strain CDC 1551 / Oshkosh)).